A 366-amino-acid chain; its full sequence is uncharacterized protein (366 aa).

Helical transmembrane passes span 30 to 50 (FWTY…AVGI), 66 to 86 (IIIA…IIVI), 136 to 156 (IFIS…GYLA), 162 to 182 (IILF…LDLL), 198 to 218 (IGVV…IYDI), and 225 to 245 (YIPE…IIDV).

The protein resides in the cell membrane. This is an uncharacterized protein from Methanocaldococcus jannaschii (strain ATCC 43067 / DSM 2661 / JAL-1 / JCM 10045 / NBRC 100440) (Methanococcus jannaschii).